A 347-amino-acid polypeptide reads, in one-letter code: 3-isopropylmalate dehydrogenase (347 aa).

Residues Arg94, Arg104, Arg128, and Asp219 each coordinate substrate. Mg(2+)-binding residues include Asp219, Asp243, and Asp247. 279–291 (GSAPDIAGQGKAD) contacts NAD(+).

This sequence belongs to the isocitrate and isopropylmalate dehydrogenases family. LeuB type 2 subfamily. As to quaternary structure, homodimer. It depends on Mg(2+) as a cofactor. Mn(2+) serves as cofactor.

The protein localises to the cytoplasm. It catalyses the reaction (2R,3S)-3-isopropylmalate + NAD(+) = 4-methyl-2-oxopentanoate + CO2 + NADH. The protein operates within amino-acid biosynthesis; L-leucine biosynthesis; L-leucine from 3-methyl-2-oxobutanoate: step 3/4. Catalyzes the oxidation of 3-carboxy-2-hydroxy-4-methylpentanoate (3-isopropylmalate) to 3-carboxy-4-methyl-2-oxopentanoate. The product decarboxylates to 4-methyl-2 oxopentanoate. This is 3-isopropylmalate dehydrogenase from Streptomyces avermitilis (strain ATCC 31267 / DSM 46492 / JCM 5070 / NBRC 14893 / NCIMB 12804 / NRRL 8165 / MA-4680).